Reading from the N-terminus, the 178-residue chain is Ribosome maturation factor RimM (178 aa).

A PRC barrel domain is found at 101 to 178 (ADEYYWYQLV…VMRVEWDADF (78 aa)).

It belongs to the RimM family. As to quaternary structure, binds ribosomal protein uS19.

Its subcellular location is the cytoplasm. In terms of biological role, an accessory protein needed during the final step in the assembly of 30S ribosomal subunit, possibly for assembly of the head region. Essential for efficient processing of 16S rRNA. May be needed both before and after RbfA during the maturation of 16S rRNA. It has affinity for free ribosomal 30S subunits but not for 70S ribosomes. The polypeptide is Ribosome maturation factor RimM (Pseudomonas putida (strain ATCC 700007 / DSM 6899 / JCM 31910 / BCRC 17059 / LMG 24140 / F1)).